Consider the following 442-residue polypeptide: UDP-N-acetylmuramoylalanine--D-glutamate ligase (442 aa).

Position 109–115 (109–115) interacts with ATP; it reads GSNGKTT.

This sequence belongs to the MurCDEF family.

It localises to the cytoplasm. It catalyses the reaction UDP-N-acetyl-alpha-D-muramoyl-L-alanine + D-glutamate + ATP = UDP-N-acetyl-alpha-D-muramoyl-L-alanyl-D-glutamate + ADP + phosphate + H(+). It participates in cell wall biogenesis; peptidoglycan biosynthesis. Cell wall formation. Catalyzes the addition of glutamate to the nucleotide precursor UDP-N-acetylmuramoyl-L-alanine (UMA). This chain is UDP-N-acetylmuramoylalanine--D-glutamate ligase, found in Solibacter usitatus (strain Ellin6076).